The chain runs to 348 residues: GTPase Obg (348 aa).

An Obg domain is found at 1 to 159; it reads MKFVDEVKVH…RELVLELKLM (159 aa). In terms of domain architecture, OBG-type G spans 160 to 331; sequence ADVGLVGLPN…LLSALVRILS (172 aa). GTP contacts are provided by residues 166–173, 191–195, 213–216, 283–286, and 312–314; these read GLPNAGKS, FTTLI, DIPG, NKVD, and SAR. Residues serine 173 and threonine 193 each coordinate Mg(2+).

This sequence belongs to the TRAFAC class OBG-HflX-like GTPase superfamily. OBG GTPase family. In terms of assembly, monomer. Mg(2+) is required as a cofactor.

It localises to the cytoplasm. Functionally, an essential GTPase which binds GTP, GDP and possibly (p)ppGpp with moderate affinity, with high nucleotide exchange rates and a fairly low GTP hydrolysis rate. Plays a role in control of the cell cycle, stress response, ribosome biogenesis and in those bacteria that undergo differentiation, in morphogenesis control. The chain is GTPase Obg from Syntrophobacter fumaroxidans (strain DSM 10017 / MPOB).